Here is a 455-residue protein sequence, read N- to C-terminus: Alcohol acyl transferase 1 allele GSb (455 aa).

Residues histidine 164 and asparagine 385 each act as proton acceptor in the active site.

Belongs to the plant acyltransferase family. Expressed at very low levels in the skin of ripe fruit.

In terms of biological role, involved in the biosynthesis of volatile esters which confer ripe apple fruit flavor. Alcohol acyl transferase that can use a wide range of alcohols as substrate to produce esters. This Malus domestica (Apple) protein is Alcohol acyl transferase 1 allele GSb.